The sequence spans 589 residues: Arginine--tRNA ligase (589 aa).

Residues P132–H142 carry the 'HIGH' region motif.

This sequence belongs to the class-I aminoacyl-tRNA synthetase family. In terms of assembly, monomer.

Its subcellular location is the cytoplasm. It catalyses the reaction tRNA(Arg) + L-arginine + ATP = L-arginyl-tRNA(Arg) + AMP + diphosphate. The protein is Arginine--tRNA ligase of Treponema pallidum subsp. pallidum (strain SS14).